The following is a 257-amino-acid chain: Phycoerythrobilin:ferredoxin oxidoreductase (257 aa).

Belongs to the HY2 family.

The catalysed reaction is (3Z)-phycoerythrobilin + oxidized 2[4Fe-4S]-[ferredoxin] = 15,16-dihydrobiliverdin + reduced 2[4Fe-4S]-[ferredoxin] + 2 H(+). Its function is as follows. Catalyzes the two-electron reduction of the C2 and C3(1) diene system of 15,16-dihydrobiliverdin. This Prochlorococcus marinus (strain MIT 9303) protein is Phycoerythrobilin:ferredoxin oxidoreductase.